The primary structure comprises 821 residues: Phenylalanine--tRNA ligase beta subunit (821 aa).

A tRNA-binding domain is found at 39–149 (RTWAEGVVVG…DAVTVGEDVR (111 aa)). A B5 domain is found at 409–503 (PLERTLTLRL…RLYGYDRFEE (95 aa)). Mg(2+)-binding residues include Asp481, Asp487, Glu490, and Glu491. One can recognise an FDX-ACB domain in the interval 724-820 (STYPASDRDL…LVEKYAVTLR (97 aa)).

It belongs to the phenylalanyl-tRNA synthetase beta subunit family. Type 1 subfamily. In terms of assembly, tetramer of two alpha and two beta subunits. Requires Mg(2+) as cofactor.

The protein localises to the cytoplasm. It catalyses the reaction tRNA(Phe) + L-phenylalanine + ATP = L-phenylalanyl-tRNA(Phe) + AMP + diphosphate + H(+). The protein is Phenylalanine--tRNA ligase beta subunit of Thermosynechococcus vestitus (strain NIES-2133 / IAM M-273 / BP-1).